Here is a 211-residue protein sequence, read N- to C-terminus: Redox-sensing transcriptional repressor Rex (211 aa).

The H-T-H motif DNA-binding region spans lysine 17 to phenylalanine 56. Position 91–96 (glycine 91–glycine 96) interacts with NAD(+).

Belongs to the transcriptional regulatory Rex family. As to quaternary structure, homodimer.

Its subcellular location is the cytoplasm. Functionally, modulates transcription in response to changes in cellular NADH/NAD(+) redox state. This is Redox-sensing transcriptional repressor Rex from Clostridium tetani (strain Massachusetts / E88).